The sequence spans 197 residues: Cytochrome c biogenesis ATP-binding export protein CcmA (197 aa).

An ABC transporter domain is found at 1-196; sequence MSMLSLHQLQ…VIKSAQILQL (196 aa). 35 to 42 lines the ATP pocket; it reads GANGSGKS.

Belongs to the ABC transporter superfamily. CcmA exporter (TC 3.A.1.107) family. In terms of assembly, the complex is composed of two ATP-binding proteins (CcmA) and two transmembrane proteins (CcmB).

Its subcellular location is the cell inner membrane. It carries out the reaction heme b(in) + ATP + H2O = heme b(out) + ADP + phosphate + H(+). In terms of biological role, part of the ABC transporter complex CcmAB involved in the biogenesis of c-type cytochromes; once thought to export heme, this seems not to be the case, but its exact role is uncertain. Responsible for energy coupling to the transport system. This chain is Cytochrome c biogenesis ATP-binding export protein CcmA, found in Rickettsia typhi (strain ATCC VR-144 / Wilmington).